The chain runs to 536 residues: Phosphoenolpyruvate carboxykinase (ATP) (536 aa).

The substrate site is built by R61, Y195, and K201. ATP-binding positions include K201, H220, and 236–244 (GLSGTGKTT). Positions 201 and 220 each coordinate Mn(2+). Mn(2+) is bound at residue D257. E285, R322, and T447 together coordinate ATP. Residue R322 coordinates substrate.

The protein belongs to the phosphoenolpyruvate carboxykinase (ATP) family. Mn(2+) is required as a cofactor.

It localises to the cytoplasm. It carries out the reaction oxaloacetate + ATP = phosphoenolpyruvate + ADP + CO2. It participates in carbohydrate biosynthesis; gluconeogenesis. Its function is as follows. Involved in the gluconeogenesis. Catalyzes the conversion of oxaloacetate (OAA) to phosphoenolpyruvate (PEP) through direct phosphoryl transfer between the nucleoside triphosphate and OAA. The chain is Phosphoenolpyruvate carboxykinase (ATP) from Rhizobium leguminosarum bv. trifolii (strain WSM2304).